The following is a 635-amino-acid chain: Interferon-induced GTP-binding protein Mx1 (635 aa).

The Dynamin-type G domain occupies 31-309 (DLALPAIAVI…LVHHIELSLP (279 aa)). The tract at residues 41–48 (GDQSSGKS) is G1 motif. 41–48 (GDQSSGKS) contributes to the GTP binding site. The segment at 66 to 68 (VTR) is G2 motif. Positions 147–150 (DLPG) are G3 motif. GTP-binding positions include 147-151 (DLPGI) and 216-219 (TKPD). The interval 216 to 219 (TKPD) is G4 motif. Positions 248-251 (RCRG) are G5 motif. The 87-residue stretch at 549-635 (LEELMRHLKS…MEARNYLVKF (87 aa)) folds into the GED domain.

The protein belongs to the TRAFAC class dynamin-like GTPase superfamily. Dynamin/Fzo/YdjA family.

The protein resides in the cytoplasm. In Ictalurus punctatus (Channel catfish), this protein is Interferon-induced GTP-binding protein Mx1 (mx1).